A 305-amino-acid chain; its full sequence is UDP-3-O-acyl-N-acetylglucosamine deacetylase (305 aa).

Residues His79, His238, and Asp242 each contribute to the Zn(2+) site. His265 (proton donor) is an active-site residue.

Belongs to the LpxC family. Zn(2+) serves as cofactor.

It carries out the reaction a UDP-3-O-[(3R)-3-hydroxyacyl]-N-acetyl-alpha-D-glucosamine + H2O = a UDP-3-O-[(3R)-3-hydroxyacyl]-alpha-D-glucosamine + acetate. Its pathway is glycolipid biosynthesis; lipid IV(A) biosynthesis; lipid IV(A) from (3R)-3-hydroxytetradecanoyl-[acyl-carrier-protein] and UDP-N-acetyl-alpha-D-glucosamine: step 2/6. Its function is as follows. Catalyzes the hydrolysis of UDP-3-O-myristoyl-N-acetylglucosamine to form UDP-3-O-myristoylglucosamine and acetate, the committed step in lipid A biosynthesis. This is UDP-3-O-acyl-N-acetylglucosamine deacetylase from Shewanella woodyi (strain ATCC 51908 / MS32).